The primary structure comprises 134 residues: Thionin-2.2 (134 aa).

A signal peptide spans 1 to 24; that stretch reads MEGKTVISSLLIMSLVLAQIQVEA. 3 cysteine pairs are disulfide-bonded: Cys27–Cys64, Cys28–Cys56, and Cys40–Cys50. Positions 71 to 134 are cleaved as a propeptide — acidic domain; it reads DILENSGDAV…GGSTAAVKSA (64 aa).

It belongs to the plant thionin (TC 1.C.44) family. In terms of tissue distribution, low basal expression in seedlings. Also detected in rosette leaves.

The protein resides in the secreted. Functionally, thionins are small plant proteins which are toxic to animal cells. They seem to exert their toxic effect at the level of the cell membrane. Their precise function is not known. The polypeptide is Thionin-2.2 (THI2.2) (Arabidopsis thaliana (Mouse-ear cress)).